The sequence spans 311 residues: Retron Ec78 reverse transcriptase (311 aa).

The 227-residue stretch at 15-241 (DSGISAFLVT…HNRHVTGVTI (227 aa)) folds into the Reverse transcriptase domain. Residues aspartate 96, aspartate 187, and aspartate 188 each coordinate Mg(2+).

Belongs to the bacterial reverse transcriptase family.

It catalyses the reaction DNA(n) + a 2'-deoxyribonucleoside 5'-triphosphate = DNA(n+1) + diphosphate. Reverse transcriptase (RT) component of antiviral defense system retron Ec78, composed of a non-coding RNA (ncRNA), this reverse transcriptase (RT), a probable ATPase and a putative HNH endonuclease. Expression of retron Ec78 confers protection against bacteriophage T5. At multiplicity of infection (MOI) of 0.02 cultures slow growth when infected with T5 but do not collapse, at MOI 2 cultures enter growth stasis. Responsible for synthesis of msDNA-Ec78 (a linear ssDNA with a 5'-terminal phosphate residue). Unlike most known msDNAs the mature product does not have an RNA component. The retron transcript serves as primer and template for the reaction, and codes for the RT. Not mutagenic when cloned in E.coli. It is thought to be synthesized as a branched RNA with a 2',5'-phosphodiester linkage to ssDNA; the linkage is cleaved endonucleolytically by ExoVII (xseA-xseB) leaving the observed mature 5'-ssDNA terminus. Overexpression of the ncRNA and RT, which leads to increased levels of msDNA, is not mutagenic in vivo. As the stem in the msDNA does not have a mismatch it probably does not bind or sequester MutS and/or MutL. This chain is Retron Ec78 reverse transcriptase, found in Escherichia coli.